Here is a 118-residue protein sequence, read N- to C-terminus: Large ribosomal subunit protein uL18 (118 aa).

The protein belongs to the universal ribosomal protein uL18 family. In terms of assembly, part of the 50S ribosomal subunit; part of the 5S rRNA/L5/L18/L25 subcomplex. Contacts the 5S and 23S rRNAs.

This is one of the proteins that bind and probably mediate the attachment of the 5S RNA into the large ribosomal subunit, where it forms part of the central protuberance. The protein is Large ribosomal subunit protein uL18 of Rickettsia bellii (strain OSU 85-389).